Consider the following 397-residue polypeptide: Phosphoglycerate kinase (397 aa).

Substrate is bound by residues 23 to 25, Arg-38, 61 to 64, Arg-119, and Arg-152; these read DLN and HLGR. ATP-binding positions include Lys-202, Glu-324, and 354–357; that span reads GGDT.

Belongs to the phosphoglycerate kinase family. As to quaternary structure, monomer.

It localises to the cytoplasm. The catalysed reaction is (2R)-3-phosphoglycerate + ATP = (2R)-3-phospho-glyceroyl phosphate + ADP. The protein operates within carbohydrate degradation; glycolysis; pyruvate from D-glyceraldehyde 3-phosphate: step 2/5. The protein is Phosphoglycerate kinase (pgk) of Xanthobacter flavus.